We begin with the raw amino-acid sequence, 312 residues long: Olfactory receptor 2M7 (312 aa).

The Extracellular segment spans residues 1-25; the sequence is MAWENQTFNSDFLLLGIFNHSPTHT. Residue Asn5 is glycosylated (N-linked (GlcNAc...) asparagine). Residues 26-49 traverse the membrane as a helical segment; it reads FLFFLVLAIFSVAFMGNSIMVLLI. The Cytoplasmic segment spans residues 50 to 57; sequence YLDTQLHT. The chain crosses the membrane as a helical span at residues 58–79; it reads PMYFLLSQLSLMDLMLICTTVP. The Extracellular segment spans residues 80–100; that stretch reads KMAFNYLSGSKSISMAGCATQ. The cysteines at positions 97 and 189 are disulfide-linked. Residues 101 to 120 traverse the membrane as a helical segment; that stretch reads IFFYISLLGSECFLLAVMSY. Over 121 to 139 the chain is Cytoplasmic; sequence DRYTAICHPLRYTNLMRPK. The helical transmembrane segment at 140–158 threads the bilayer; that stretch reads ICGLMTAFSWILGSTDGII. The Extracellular portion of the chain corresponds to 159–195; that stretch reads DAVATFSFSYCGSREIAHFCCDFPSLLILSCNDTSIF. A helical membrane pass occupies residues 196 to 219; the sequence is EEVIFICCIVMLVFPVAIIITSYA. The Cytoplasmic segment spans residues 220–236; it reads RVILAVIHMGSGEGRRK. Residues 237-259 traverse the membrane as a helical segment; the sequence is AFTTCSSHLMVVGMYYGAGLFMC. Over 260 to 272 the chain is Extracellular; sequence IQPTSHHSPMQDK. Residues 273–292 traverse the membrane as a helical segment; that stretch reads MVSVFYTIVTPMLNPLIYSL. The Cytoplasmic portion of the chain corresponds to 293-311; the sequence is RNKEVTRALMKILGKGKSG.

The protein belongs to the G-protein coupled receptor 1 family.

It localises to the cell membrane. In terms of biological role, odorant receptor. In Homo sapiens (Human), this protein is Olfactory receptor 2M7 (OR2M7).